Reading from the N-terminus, the 1301-residue chain is Dentin sialophosphoprotein (1301 aa).

Residues Met-1 to Ala-15 form the signal peptide. Asn-41 and Asn-49 each carry an N-linked (GlcNAc...) asparagine glycan. The segment at Lys-55–Gly-89 is disordered. The span at His-62–Glu-79 shows a compositional bias: basic and acidic residues. 7 N-linked (GlcNAc...) asparagine glycosylation sites follow: Asn-81, Asn-130, Asn-150, Asn-190, Asn-191, Asn-209, and Asn-222. Positions Ala-146–Gly-165 are enriched in polar residues. A disordered region spans residues Ala-146–Gly-171. The interval Asn-202–Asp-1301 is disordered. Residues Ser-203–Arg-221 are compositionally biased toward polar residues. The span at Ala-251–Ala-267 shows a compositional bias: acidic residues. The residue at position 259 (Ser-259) is a Phosphoserine; by CK1. Over residues Lys-271 to Gln-280 the composition is skewed to polar residues. Residue Asn-275 is glycosylated (N-linked (GlcNAc...) asparagine). Composition is skewed to basic and acidic residues over residues Glu-281 to Ser-293 and Asp-300 to Glu-327. Ser-301 bears the Phosphoserine mark. Residue Asn-336 is glycosylated (N-linked (GlcNAc...) asparagine). The segment covering Arg-340–Glu-377 has biased composition (basic and acidic residues). The N-linked (GlcNAc...) asparagine glycan is linked to Asn-387. The span at Ile-388 to Gln-404 shows a compositional bias: basic and acidic residues. 2 stretches are compositionally biased toward low complexity: residues Ser-439–Ser-452 and Gly-462–Ser-487. The Cell attachment site signature appears at Arg-488–Asp-490. Over residues Arg-488–Asp-506 the composition is skewed to polar residues. Residues Thr-518–Asn-534 show a composition bias toward low complexity. A compositionally biased stretch (basic and acidic residues) spans Asp-536–Ser-549. A compositionally biased stretch (low complexity) spans Ser-555–Ser-564. Acidic residues predominate over residues Asp-581–Ser-595. Positions Ser-596–Ser-619 are enriched in low complexity. Positions Ser-620–Ser-642 are enriched in basic and acidic residues. Composition is skewed to low complexity over residues Ser-643–Ser-705, Ser-715–Asp-1264, Gln-1272–Asp-1284, and Ser-1292–Asp-1301.

As to quaternary structure, interacts with FBLN7. DSP is glycosylated. In terms of tissue distribution, expressed in teeth. DPP is synthesized by odontoblast and transiently expressed by pre-ameloblasts.

The protein resides in the secreted. It is found in the extracellular space. Its subcellular location is the extracellular matrix. DSP may be an important factor in dentinogenesis. DPP may bind high amount of calcium and facilitate initial mineralization of dentin matrix collagen as well as regulate the size and shape of the crystals. In Homo sapiens (Human), this protein is Dentin sialophosphoprotein (DSPP).